The chain runs to 446 residues: MDRQKEFVLRTLEERDIRFVRLWFTDVLGFLKSVAIAPAELEGAFEEGIGFDGSSIEGFARVSESDTVAHPDPSTFQVLPWATSSGHHHSARMFCDITMPDGSPSWADPRHVLRRQLTKAGELGFSCYVHPEIEFFLLKPGPEDGSVPVPVDNAGYFDQAVHDSALNFRRHAIDALEFMGISVEFSHHEGAPGQQEIDLRFADALSMADNVMTFRYVIKEVALEEGARASFMPKPFGQHPGSAMHTHMSLFEGDVNAFHSADDPLQLSEVGKSFIAGILEHACEISAVTNQWVNSYKRLVQGGEAPTAASWGAANRSALVRVPMYTPHKTSSRRVEVRSPDSACNPYLTFAVLLAAGLRGVEKGYVLGPQAEDNVWDLTPEERRAMGYRELPSSLDSALRAMEASELVAEALGEHVFDFFLRNKRTEWANYRSHVTPYELRTYLSL.

Residues R15–G102 form the GS beta-grasp domain. Residues P109 to L446 enclose the GS catalytic domain. Mg(2+) contacts are provided by E132 and E134. E184 contacts ATP. E189 and E196 together coordinate Mg(2+). G241 is a binding site for L-glutamate. H245 contributes to the Mg(2+) binding site. Residues H247–S249 and S249 each bind ATP. The L-glutamate site is built by R298, E304, and R316. Positions 316 and 321 each coordinate ATP. Residue E336 coordinates Mg(2+). R338 is a binding site for L-glutamate.

The protein belongs to the glutamine synthetase family. Oligomer of 12 subunits arranged in the form of two hexagons. In its feedback-inhibited form, interacts with TnrA in order to block its DNA-binding activity. Requires Mg(2+) as cofactor.

Its subcellular location is the cytoplasm. The enzyme catalyses L-glutamate + NH4(+) + ATP = L-glutamine + ADP + phosphate + H(+). Its activity is regulated as follows. Inhibited by glutamine. Functionally, glutamine synthetase (GS) is an unusual multitasking protein that functions as an enzyme, a transcription coregulator, and a chaperone in ammonium assimilation and in the regulation of genes involved in nitrogen metabolism. It catalyzes the ATP-dependent biosynthesis of glutamine from glutamate and ammonia. Feedback-inhibited GlnA also interacts with and regulates the activity of the transcriptional regulator TnrA. During nitrogen limitation, TnrA is in its DNA-binding active state and turns on the transcription of genes required for nitrogen assimilation. Under conditions of nitrogen excess, feedback-inhibited GlnA forms a stable complex with TnrA, which inhibits its DNA-binding activity. In contrast, feedback-inhibited GlnA acts as a chaperone to stabilize the DNA-binding activity of GlnR, which represses the transcription of nitrogen assimilation genes. This chain is Glutamine synthetase, found in Mycobacterium bovis (strain ATCC BAA-935 / AF2122/97).